Here is a 111-residue protein sequence, read N- to C-terminus: MAASFSVTRRFFDDKNYPRGFSRHGDYTIKESQVLEQYGQAFKALDLGEREPATKEEKDFVAFCRGERAAETFFEKTWNKYRTRINTKKRVYTLSSDVSEAASGGEDYSGE.

The protein belongs to the MaoP family.

In terms of biological role, involved in the organization of the Ori region of the chromosome into a macrodomain (MD). It constrains DNA mobility in the Ori macrodomain and limits long-distance DNA interactions with other chromosomal regions. The chain is Macrodomain Ori protein from Haemophilus influenzae (strain ATCC 51907 / DSM 11121 / KW20 / Rd).